We begin with the raw amino-acid sequence, 353 residues long: Chorismate synthase (353 aa).

Residue Arg48 participates in NADP(+) binding. FMN-binding positions include 128-130, Gly280, 295-299, and Arg321; these read RAS and KPIPS.

This sequence belongs to the chorismate synthase family. Homotetramer. The cofactor is FMNH2.

The catalysed reaction is 5-O-(1-carboxyvinyl)-3-phosphoshikimate = chorismate + phosphate. It functions in the pathway metabolic intermediate biosynthesis; chorismate biosynthesis; chorismate from D-erythrose 4-phosphate and phosphoenolpyruvate: step 7/7. Catalyzes the anti-1,4-elimination of the C-3 phosphate and the C-6 proR hydrogen from 5-enolpyruvylshikimate-3-phosphate (EPSP) to yield chorismate, which is the branch point compound that serves as the starting substrate for the three terminal pathways of aromatic amino acid biosynthesis. This reaction introduces a second double bond into the aromatic ring system. The polypeptide is Chorismate synthase (Nitratidesulfovibrio vulgaris (strain DSM 19637 / Miyazaki F) (Desulfovibrio vulgaris)).